We begin with the raw amino-acid sequence, 1485 residues long: Chromosome partition protein MukB (1485 aa).

34–41 (GGNGAGKS) lines the ATP pocket. Coiled-coil stretches lie at residues 337–480 (LNLV…QAYQ), 509–605 (QHLA…PVWL), 780–805 (RAAR…ATLS), 835–915 (EAEI…IQQH), 977–1116 (GMLT…AKAG), and 1210–1235 (EAIE…KLAI). A flexible hinge region spans residues 666 to 783 (PSGAEDARLI…EVPLFGRAAR (118 aa)).

It belongs to the SMC family. MukB subfamily. In terms of assembly, homodimerization via its hinge domain. Binds to DNA via its C-terminal region. Interacts, and probably forms a ternary complex, with MukE and MukF via its C-terminal region. The complex formation is stimulated by calcium or magnesium. Interacts with tubulin-related protein FtsZ.

The protein localises to the cytoplasm. It is found in the nucleoid. Plays a central role in chromosome condensation, segregation and cell cycle progression. Functions as a homodimer, which is essential for chromosome partition. Involved in negative DNA supercoiling in vivo, and by this means organize and compact chromosomes. May achieve or facilitate chromosome segregation by condensation DNA from both sides of a centrally located replisome during cell division. The protein is Chromosome partition protein MukB of Yersinia pestis bv. Antiqua (strain Antiqua).